The sequence spans 160 residues: MSLATLDTSQHPNLPSASATLFKAKAAKKFSFEQIAQHIGRNEVATAAIFYGQAKASPEDITNLASLLEIPQEVLEDQLSGFPDRGKSVEMPPKEPLIYRLYEIVQNYGYAYKAVLNEKFGDGIMSAISFSTKVEKETDADGNNWAVITLRGKWLPFSRF.

Catalysis depends on residues Arg100, Glu103, and Ser126.

The protein belongs to the cyanase family.

It carries out the reaction cyanate + hydrogencarbonate + 3 H(+) = NH4(+) + 2 CO2. Catalyzes the reaction of cyanate with bicarbonate to produce ammonia and carbon dioxide. The chain is Cyanate hydratase from Aspergillus flavus (strain ATCC 200026 / FGSC A1120 / IAM 13836 / NRRL 3357 / JCM 12722 / SRRC 167).